Here is a 179-residue protein sequence, read N- to C-terminus: Ribosome maturation factor RimM (179 aa).

Residues 102–179 (DGEYYWYQLE…EMKVDWDADF (78 aa)) enclose the PRC barrel domain.

This sequence belongs to the RimM family. As to quaternary structure, binds ribosomal protein uS19.

It localises to the cytoplasm. In terms of biological role, an accessory protein needed during the final step in the assembly of 30S ribosomal subunit, possibly for assembly of the head region. Essential for efficient processing of 16S rRNA. May be needed both before and after RbfA during the maturation of 16S rRNA. It has affinity for free ribosomal 30S subunits but not for 70S ribosomes. This Pseudomonas syringae pv. syringae (strain B728a) protein is Ribosome maturation factor RimM.